The chain runs to 543 residues: Gap junction alpha-10 protein (543 aa).

Topologically, residues 1–16 (MGDWNLLGGILEEVHS) are cytoplasmic. Residues 17–37 (HSTIVGKIWLTILFIFRMLVL) traverse the membrane as a helical segment. The Extracellular segment spans residues 38–76 (RVAAEDVWDDEQSAFACNTRQPGCNNICYDDAFPISLIR). A helical membrane pass occupies residues 77–97 (FWVLQIIFVSSPSLVYMGHAL). The Cytoplasmic segment spans residues 98–165 (YRLRAFEKDR…TYVLHILTRS (68 aa)). Residues 166–186 (VLEVGFMIGQYILYGFQMHPL) form a helical membrane-spanning segment. The Extracellular segment spans residues 187-209 (YKCTQPPCPNAVDCFVSRPTEKT). The chain crosses the membrane as a helical span at residues 210 to 230 (IFMLFMHSIAAISLLLNILEI). Topologically, residues 231–543 (FHLGIRKIMR…HSIHSVKFNS (313 aa)) are cytoplasmic. 2 disordered regions span residues 306 to 359 (PQPR…SSFG) and 379 to 424 (PSFA…DRSR). The segment covering 317–328 (NGKKDWSEKDQH) has biased composition (basic and acidic residues). A compositionally biased stretch (polar residues) spans 344-359 (AGNQHLGQQSDHSSFG). Positions 400–413 (TDLHSHCRDSEGSM) are enriched in basic and acidic residues.

Belongs to the connexin family. Alpha-type (group II) subfamily. In terms of assembly, a connexon is composed of a hexamer of connexins. Expressed in skeletal muscle and heart.

It is found in the cell membrane. The protein resides in the cell junction. Its subcellular location is the gap junction. In terms of biological role, one gap junction consists of a cluster of closely packed pairs of transmembrane channels, the connexons, through which materials of low MW diffuse from one cell to a neighboring cell. Involved in tracer coupling between horizontal cells of the retina. May play a role in the regulation of horizontal cell patterning. This is Gap junction alpha-10 protein (GJA10) from Homo sapiens (Human).